The chain runs to 365 residues: Glucose 1-dehydrogenase 1 (365 aa).

D38 contributes to the Zn(2+) binding site. T40 serves as a coordination point for substrate. Zn(2+) is bound by residues H63 and E64. 2 residues coordinate substrate: E115 and E151. E151 serves as a coordination point for Zn(2+). NADP(+)-binding positions include 182–185, 207–208, 272–274, and 301–303; these read NGSL, RR, LGV, and SVN. N303 provides a ligand contact to substrate.

This sequence belongs to the zinc-containing alcohol dehydrogenase family. Glucose 1-dehydrogenase subfamily. Zn(2+) is required as a cofactor.

It carries out the reaction D-glucose + NAD(+) = D-glucono-1,5-lactone + NADH + H(+). It catalyses the reaction D-glucose + NADP(+) = D-glucono-1,5-lactone + NADPH + H(+). Its function is as follows. Catalyzes the NAD(P)(+)-dependent oxidation of D-glucose to D-gluconate via gluconolactone. Can utilize both NAD(+) and NADP(+) as electron acceptor. Is involved in the degradation of glucose through a modified Entner-Doudoroff pathway. The sequence is that of Glucose 1-dehydrogenase 1 from Haloterrigena turkmenica (strain ATCC 51198 / DSM 5511 / JCM 9101 / NCIMB 13204 / VKM B-1734 / 4k) (Halococcus turkmenicus).